A 168-amino-acid chain; its full sequence is SPbeta prophage-derived uncharacterized protein YonX (168 aa).

Positions 1 to 53 form a coiled coil; sequence MNAQLFNLESRLDELENEINTQYCELDTNLDALKSNRIELESQLEKFESSLTN.

This chain is SPbeta prophage-derived uncharacterized protein YonX (yonX), found in Bacillus subtilis (strain 168).